Consider the following 463-residue polypeptide: L-seryl-tRNA(Sec) selenium transferase (463 aa).

Position 295 is an N6-(pyridoxal phosphate)lysine (Lys-295).

This sequence belongs to the SelA family. Homodecamer; pentamer of dimers. Binds only one seryl-tRNA(Sec) per dimer. Requires pyridoxal 5'-phosphate as cofactor.

It is found in the cytoplasm. It catalyses the reaction L-seryl-tRNA(Sec) + selenophosphate + H(+) = L-selenocysteinyl-tRNA(Sec) + phosphate. It functions in the pathway aminoacyl-tRNA biosynthesis; selenocysteinyl-tRNA(Sec) biosynthesis; selenocysteinyl-tRNA(Sec) from L-seryl-tRNA(Sec) (bacterial route): step 1/1. Its function is as follows. Converts seryl-tRNA(Sec) to selenocysteinyl-tRNA(Sec) required for selenoprotein biosynthesis. The protein is L-seryl-tRNA(Sec) selenium transferase of Escherichia coli (strain K12 / MC4100 / BW2952).